Here is a 262-residue protein sequence, read N- to C-terminus: Ribosomal RNA small subunit methyltransferase A (262 aa).

Residues Asn14, Leu16, Gly41, Glu62, Asp87, and Asn109 each contribute to the S-adenosyl-L-methionine site.

This sequence belongs to the class I-like SAM-binding methyltransferase superfamily. rRNA adenine N(6)-methyltransferase family. RsmA subfamily.

It localises to the cytoplasm. It catalyses the reaction adenosine(1518)/adenosine(1519) in 16S rRNA + 4 S-adenosyl-L-methionine = N(6)-dimethyladenosine(1518)/N(6)-dimethyladenosine(1519) in 16S rRNA + 4 S-adenosyl-L-homocysteine + 4 H(+). Its function is as follows. Specifically dimethylates two adjacent adenosines (A1518 and A1519) in the loop of a conserved hairpin near the 3'-end of 16S rRNA in the 30S particle. May play a critical role in biogenesis of 30S subunits. This chain is Ribosomal RNA small subunit methyltransferase A, found in Francisella tularensis subsp. novicida (strain U112).